A 95-amino-acid chain; its full sequence is Aspartyl/glutamyl-tRNA(Asn/Gln) amidotransferase subunit C (95 aa).

The protein belongs to the GatC family. Heterotrimer of A, B and C subunits.

It catalyses the reaction L-glutamyl-tRNA(Gln) + L-glutamine + ATP + H2O = L-glutaminyl-tRNA(Gln) + L-glutamate + ADP + phosphate + H(+). It carries out the reaction L-aspartyl-tRNA(Asn) + L-glutamine + ATP + H2O = L-asparaginyl-tRNA(Asn) + L-glutamate + ADP + phosphate + 2 H(+). Its function is as follows. Allows the formation of correctly charged Asn-tRNA(Asn) or Gln-tRNA(Gln) through the transamidation of misacylated Asp-tRNA(Asn) or Glu-tRNA(Gln) in organisms which lack either or both of asparaginyl-tRNA or glutaminyl-tRNA synthetases. The reaction takes place in the presence of glutamine and ATP through an activated phospho-Asp-tRNA(Asn) or phospho-Glu-tRNA(Gln). The chain is Aspartyl/glutamyl-tRNA(Asn/Gln) amidotransferase subunit C from Clostridium botulinum (strain 657 / Type Ba4).